We begin with the raw amino-acid sequence, 370 residues long: S-adenosylmethionine decarboxylase proenzyme (370 aa).

Phe-28 provides a ligand contact to substrate. Active-site residues include Glu-29 and Glu-32. Glu-85 contacts substrate. The Schiff-base intermediate with substrate; via pyruvic acid role is filled by Ser-86. At Ser-86 the chain carries Pyruvic acid (Ser); by autocatalysis. Cys-100 serves as the catalytic Proton donor; for catalytic activity. Residues Ser-250 and His-263 each act as proton acceptor; for processing activity in the active site. Glu-267 is a substrate binding site.

It belongs to the eukaryotic AdoMetDC family. Forms a heterodimer with catalytically inactive AdoMetDC prozyme; heterodimerization is required to activate AdoMetDC. Pyruvate serves as cofactor. Is synthesized initially as an inactive proenzyme. Formation of the active enzyme involves a self-maturation process in which the active site pyruvoyl group is generated from an internal serine residue via an autocatalytic post-translational modification. Two non-identical subunits are generated from the proenzyme in this reaction, and the pyruvate is formed at the N-terminus of the alpha chain, which is derived from the carboxyl end of the proenzyme. The post-translation cleavage follows an unusual pathway, termed non-hydrolytic serinolysis, in which the side chain hydroxyl group of the serine supplies its oxygen atom to form the C-terminus of the beta chain, while the remainder of the serine residue undergoes an oxidative deamination to the alpha chain.

The enzyme catalyses S-adenosyl-L-methionine + H(+) = S-adenosyl 3-(methylsulfanyl)propylamine + CO2. It functions in the pathway amine and polyamine biosynthesis; S-adenosylmethioninamine biosynthesis; S-adenosylmethioninamine from S-adenosyl-L-methionine: step 1/1. Allosterically activated by AdoMetDC prozyme. Activated by putrescine. Inhibited by spermine and methylglyoxal-bis(guanylhydrazone) (MGBG) and slightly by spermidine. Inhibited by 5'-([(Z)-4-amino-2-butenyl]methylamino)-5'-deoxyadenosine (MDL 73811). In terms of biological role, probably in association with catalytically inactive AdoMetDC prozyme, catalyzes the decarboxylation of S-adenosyl-L-methionine which is essential for the biosynthesis of the polyamine spermidine. Required for growth and survival during the bloodstream life cycle stage. The sequence is that of S-adenosylmethionine decarboxylase proenzyme from Trypanosoma cruzi.